The primary structure comprises 275 residues: Formamidopyrimidine-DNA glycosylase (275 aa).

Pro-2 (schiff-base intermediate with DNA) is an active-site residue. The active-site Proton donor is the Glu-3. Lys-58 functions as the Proton donor; for beta-elimination activity in the catalytic mechanism. His-91 and Arg-110 together coordinate DNA. The segment at 238 to 272 (QVYGQTGKPCPRCGQAIVKLKVGGRGTHICPKCQK) adopts an FPG-type zinc-finger fold. Arg-262 acts as the Proton donor; for delta-elimination activity in catalysis.

Belongs to the FPG family. In terms of assembly, monomer. Requires Zn(2+) as cofactor.

It catalyses the reaction Hydrolysis of DNA containing ring-opened 7-methylguanine residues, releasing 2,6-diamino-4-hydroxy-5-(N-methyl)formamidopyrimidine.. The enzyme catalyses 2'-deoxyribonucleotide-(2'-deoxyribose 5'-phosphate)-2'-deoxyribonucleotide-DNA = a 3'-end 2'-deoxyribonucleotide-(2,3-dehydro-2,3-deoxyribose 5'-phosphate)-DNA + a 5'-end 5'-phospho-2'-deoxyribonucleoside-DNA + H(+). Involved in base excision repair of DNA damaged by oxidation or by mutagenic agents. Acts as a DNA glycosylase that recognizes and removes damaged bases. Has a preference for oxidized purines, such as 7,8-dihydro-8-oxoguanine (8-oxoG). Has AP (apurinic/apyrimidinic) lyase activity and introduces nicks in the DNA strand. Cleaves the DNA backbone by beta-delta elimination to generate a single-strand break at the site of the removed base with both 3'- and 5'-phosphates. The protein is Formamidopyrimidine-DNA glycosylase of Streptococcus pyogenes serotype M18 (strain MGAS8232).